We begin with the raw amino-acid sequence, 305 residues long: Glutaminase (305 aa).

Substrate is bound by residues S61, N113, E158, N165, Y189, Y241, and V259.

It belongs to the glutaminase family. In terms of assembly, homotetramer.

It carries out the reaction L-glutamine + H2O = L-glutamate + NH4(+). This chain is Glutaminase, found in Alkaliphilus metalliredigens (strain QYMF).